The primary structure comprises 154 residues: uncharacterized protein (154 aa).

This is an uncharacterized protein from Aquifex aeolicus (strain VF5).